We begin with the raw amino-acid sequence, 474 residues long: Mercuric reductase (474 aa).

Positions 19, 39, and 44 each coordinate FAD. A disulfide bridge links C45 with C50. Residues K54, A119, D315, and V323 each coordinate FAD. Residues C471 and C472 each contribute to the Hg(2+) site.

The protein belongs to the class-I pyridine nucleotide-disulfide oxidoreductase family. As to quaternary structure, homodimer. Requires FAD as cofactor.

The catalysed reaction is Hg + NADP(+) + H(+) = Hg(2+) + NADPH. Its function is as follows. Resistance to Hg(2+) in bacteria appears to be governed by a specialized system which includes mercuric reductase. MerA protein is responsible for volatilizing mercury as Hg(0). This is Mercuric reductase (merA) from Streptomyces lividans.